Reading from the N-terminus, the 259-residue chain is Oxaloacetate tautomerase FMP41, mitochondrial (259 aa).

The Mg(2+) site is built by Glu-87, Glu-89, and Asp-121.

Belongs to the FAH family. Requires Mg(2+) as cofactor. The cofactor is Mn(2+).

The protein resides in the mitochondrion. It carries out the reaction oxaloacetate = enol-oxaloacetate. Tautomerase that converts enol-oxaloacetate, a strong inhibitor of succinate dehydrogenase, to the physiological keto form of oxaloacetate. This is Oxaloacetate tautomerase FMP41, mitochondrial from Saccharomyces cerevisiae (strain ATCC 204508 / S288c) (Baker's yeast).